A 207-amino-acid chain; its full sequence is Peptidyl-tRNA hydrolase (207 aa).

Position 14 (Tyr14) interacts with tRNA. His19 (proton acceptor) is an active-site residue. Positions 64, 66, and 112 each coordinate tRNA.

The protein belongs to the PTH family. In terms of assembly, monomer.

The protein localises to the cytoplasm. The catalysed reaction is an N-acyl-L-alpha-aminoacyl-tRNA + H2O = an N-acyl-L-amino acid + a tRNA + H(+). Functionally, hydrolyzes ribosome-free peptidyl-tRNAs (with 1 or more amino acids incorporated), which drop off the ribosome during protein synthesis, or as a result of ribosome stalling. In terms of biological role, catalyzes the release of premature peptidyl moieties from peptidyl-tRNA molecules trapped in stalled 50S ribosomal subunits, and thus maintains levels of free tRNAs and 50S ribosomes. The protein is Peptidyl-tRNA hydrolase of Rhodopseudomonas palustris (strain HaA2).